Reading from the N-terminus, the 772-residue chain is Major capsid protein (772 aa).

The interval 593-772 (GIAPGRSNAG…AAQADRAEGQ (180 aa)) is disordered. Residues 654-664 (NRGGEAGGVTG) are compositionally biased toward gly residues. Over residues 716–742 (PLPPAPGAAPPPPPGPPNGPPAGPPPS) the composition is skewed to pro residues. A compositionally biased stretch (low complexity) spans 743–766 (DDGSSNPAAPVPTAIHAPPAAAQA).

Belongs to the totivirus major capsid protein family.

The protein localises to the virion. Its function is as follows. Capsid protein self-assembles to form an icosahedral capsid with a T=2 symmetry, 40 nm in diameter, and consisting of 60 capsid proteins asymmetric dimers. The capsid encapsulates the genomic dsRNA and the polymerase and remains intact following cell entry to protect the dsRNA from degradation and to prevent unfavorable antiviral responses in the host cell during all the replication cycle of the virus. Nascent transcripts are transcribed within the structural confines of the virion and are extruded into the cytoplasm. Functionally, binds and removes 5' cap structures from cellular mRNA. The polypeptide is Major capsid protein (Helminthosporium victoriae virus-190S (Hv190SV)).